A 73-amino-acid polypeptide reads, in one-letter code: MKLSVTFIALMLTMTLTQGFVLQAIDGRDNSGLDDLSEADSMEHQLQRRDCGRCPLGQYCDAEAGMCKPTLIM.

An N-terminal signal peptide occupies residues 1–19 (MKLSVTFIALMLTMTLTQG). Residues 20–47 (FVLQAIDGRDNSGLDDLSEADSMEHQLQ) constitute a propeptide that is removed on maturation.

The protein belongs to the conotoxin L superfamily. Contains 2 disulfide bonds. Expressed by the venom duct.

It is found in the secreted. In Californiconus californicus (California cone), this protein is Conotoxin Cl14.8.